We begin with the raw amino-acid sequence, 242 residues long: Small ribosomal subunit protein uS3 (242 aa).

Residues 39–109 (IRQYVEKNLA…QIRINVIEVA (71 aa)) enclose the KH type-2 domain. Residues 220 to 242 (VPAQAPRRQQRRRQQFEDRSSEG) form a disordered region. Basic and acidic residues predominate over residues 233 to 242 (QQFEDRSSEG).

This sequence belongs to the universal ribosomal protein uS3 family. In terms of assembly, part of the 30S ribosomal subunit. Forms a tight complex with proteins S10 and S14.

Binds the lower part of the 30S subunit head. Binds mRNA in the 70S ribosome, positioning it for translation. In Microcystis aeruginosa (strain NIES-843 / IAM M-2473), this protein is Small ribosomal subunit protein uS3.